The chain runs to 340 residues: DNA-directed RNA polymerase subunit alpha (340 aa).

Positions 1-236 are alpha N-terminal domain (alpha-NTD); the sequence is MSVIQKNWQE…DQLQLFINFE (236 aa). The tract at residues 252 to 340 is alpha C-terminal domain (alpha-CTD); that stretch reads FNKNLLRKVD…DLAKKLEEPY (89 aa).

It belongs to the RNA polymerase alpha chain family. Homodimer. The RNAP catalytic core consists of 2 alpha, 1 beta, 1 beta' and 1 omega subunit. When a sigma factor is associated with the core the holoenzyme is formed, which can initiate transcription.

The enzyme catalyses RNA(n) + a ribonucleoside 5'-triphosphate = RNA(n+1) + diphosphate. In terms of biological role, DNA-dependent RNA polymerase catalyzes the transcription of DNA into RNA using the four ribonucleoside triphosphates as substrates. In Rhodospirillum rubrum (strain ATCC 11170 / ATH 1.1.1 / DSM 467 / LMG 4362 / NCIMB 8255 / S1), this protein is DNA-directed RNA polymerase subunit alpha.